Consider the following 747-residue polypeptide: MASRVTDAIVWYQKKIGAYDQQIWEKSVEQREIKGLRNKPKKTAHVKPDLIDVDLVRGSAFAKAKPESPWTSLTRKGIVRVVFFPFFSRWWLQVTSRVIFSWLLVLYLLQVAAIVLFCSAPSPHSIPLTEVIGPIWLMLLLGTVHCQIVSTRTPKPPLGTGGKRRRKLRKAAHLEVHREGDGSSTTDNTQEGAVQSYGAGAPYSVGTVFRDLWLAAFFLSGSKKAKNSIDKSTETDNGYVSLDGKRTVKSSEDGAQYHELQCETVGPEDAAWATRTPRSVPAKDTQRKITNVSDEVSSEEGPETGYPLRGHVDRTSESGLRNRKPHHYKKHYANEDAPKSGTSCSSRCSSSRQDSESTRPESETEGVLWEDLLHCAECRSSCTSETDVGNPQINPCGKKEYRDDPFHQSHLPWLHSSHPGLEKISAIVWEGNDCKKADMSVLEISGMIMNRVNNHVPGIGYQVFGNAISLILGLTPFVFRLSQATDLEQLTAHSASELYVIAFGSNEDVMVLSMVLISFVVRVSLVWIFFFLLCVAERTYKQRLLFAKLFGHLTSARRARKSEVPHFRLKKVQNIKMWLSLRSYLKRRGPQRSVDVIVSSAFLLTISVVFICCAQLLHVHEIFLDCHCNWELVIWCISLTLFLLRFVTLGSETSKKYSNTSILLTEQINLYLKMEKKPNKKEELTLVNNVLKLATKLLKELDSPFRLYGLTMNPLLYNITQVVILSAVSGVISDLLGFNLKLWKIKS.

A PHTF domain is found at 6-153 (TDAIVWYQKK…VHCQIVSTRT (148 aa)). Helical transmembrane passes span 98–118 (VIFS…VLFC) and 126–146 (IPLT…TVHC). 2 disordered regions span residues 170 to 192 (KAAH…TQEG) and 268 to 365 (EDAA…SETE). Basic and acidic residues predominate over residues 172–181 (AHLEVHREGD). Residues 182-192 (GSSTTDNTQEG) are compositionally biased toward polar residues. An N-linked (GlcNAc...) asparagine glycan is attached at asparagine 291. The segment covering 321 to 331 (RNRKPHHYKKH) has biased composition (basic residues). Over residues 340-352 (SGTSCSSRCSSSR) the composition is skewed to low complexity. Over residues 353–362 (QDSESTRPES) the composition is skewed to basic and acidic residues. A run of 4 helical transmembrane segments spans residues 459 to 479 (IGYQ…PFVF), 515 to 535 (VLIS…LLCV), 596 to 616 (VIVS…CAQL), and 630 to 650 (WELV…VTLG). 2 N-linked (GlcNAc...) asparagine glycosylation sites follow: asparagine 659 and asparagine 718. A helical membrane pass occupies residues 722–742 (VVILSAVSGVISDLLGFNLKL).

The protein localises to the membrane. This Mus musculus (Mouse) protein is Protein PHTF2 (Phtf2).